Consider the following 275-residue polypeptide: Light-independent protochlorophyllide reductase iron-sulfur ATP-binding protein (275 aa).

ATP-binding positions include G10–T15 and K39. Residue S14 coordinates Mg(2+). [4Fe-4S] cluster-binding residues include C95 and C129. Position 180–181 (N180–R181) interacts with ATP.

Belongs to the NifH/BchL/ChlL family. As to quaternary structure, homodimer. Protochlorophyllide reductase is composed of three subunits; ChlL, ChlN and ChlB. [4Fe-4S] cluster serves as cofactor.

It carries out the reaction chlorophyllide a + oxidized 2[4Fe-4S]-[ferredoxin] + 2 ADP + 2 phosphate = protochlorophyllide a + reduced 2[4Fe-4S]-[ferredoxin] + 2 ATP + 2 H2O. Its pathway is porphyrin-containing compound metabolism; chlorophyll biosynthesis (light-independent). Its function is as follows. Component of the dark-operative protochlorophyllide reductase (DPOR) that uses Mg-ATP and reduced ferredoxin to reduce ring D of protochlorophyllide (Pchlide) to form chlorophyllide a (Chlide). This reaction is light-independent. The L component serves as a unique electron donor to the NB-component of the complex, and binds Mg-ATP. This chain is Light-independent protochlorophyllide reductase iron-sulfur ATP-binding protein, found in Gloeobacter violaceus (strain ATCC 29082 / PCC 7421).